The chain runs to 215 residues: Vacuolar ATPase assembly integral membrane protein VPH2 (215 aa).

The Cytoplasmic segment spans residues 1 to 134; that stretch reads MFEIKLNDRI…SQINKQIKEQ (134 aa). A helical transmembrane segment spans residues 135 to 155; that stretch reads VTTVFNVLVSVISVVVAIWYW. Over 156–167 the chain is Lumenal; sequence TGSSTNFPVHVR. The helical transmembrane segment at 168-186 threads the bilayer; it reads LLLCLFFGILVLVADVVVY. The Cytoplasmic portion of the chain corresponds to 187 to 215; the sequence is NSYLKKLEEAKVKEKTKVEKKKVLSKITL.

Its subcellular location is the endoplasmic reticulum membrane. Required for vacuolar ATPase assembly. In Saccharomyces cerevisiae (strain ATCC 204508 / S288c) (Baker's yeast), this protein is Vacuolar ATPase assembly integral membrane protein VPH2 (VPH2).